We begin with the raw amino-acid sequence, 262 residues long: Acyl-[acyl-carrier-protein]--UDP-N-acetylglucosamine O-acyltransferase (262 aa).

This sequence belongs to the transferase hexapeptide repeat family. LpxA subfamily. As to quaternary structure, homotrimer.

It is found in the cytoplasm. It carries out the reaction a (3R)-hydroxyacyl-[ACP] + UDP-N-acetyl-alpha-D-glucosamine = a UDP-3-O-[(3R)-3-hydroxyacyl]-N-acetyl-alpha-D-glucosamine + holo-[ACP]. Its pathway is glycolipid biosynthesis; lipid IV(A) biosynthesis; lipid IV(A) from (3R)-3-hydroxytetradecanoyl-[acyl-carrier-protein] and UDP-N-acetyl-alpha-D-glucosamine: step 1/6. Functionally, involved in the biosynthesis of lipid A, a phosphorylated glycolipid that anchors the lipopolysaccharide to the outer membrane of the cell. The sequence is that of Acyl-[acyl-carrier-protein]--UDP-N-acetylglucosamine O-acyltransferase from Paraburkholderia phymatum (strain DSM 17167 / CIP 108236 / LMG 21445 / STM815) (Burkholderia phymatum).